Reading from the N-terminus, the 159-residue chain is Ribonuclease H (159 aa).

Residues 4-145 (THKQVNIYTD…CDKLARDAAE (142 aa)) enclose the RNase H type-1 domain. The Mg(2+) site is built by D13, E51, D73, and D137.

Belongs to the RNase H family. In terms of assembly, monomer. Mg(2+) serves as cofactor.

The protein resides in the cytoplasm. It carries out the reaction Endonucleolytic cleavage to 5'-phosphomonoester.. In terms of biological role, endonuclease that specifically degrades the RNA of RNA-DNA hybrids. The sequence is that of Ribonuclease H from Shewanella denitrificans (strain OS217 / ATCC BAA-1090 / DSM 15013).